The primary structure comprises 241 residues: Small ribosomal subunit protein uS2 (241 aa).

It belongs to the universal ribosomal protein uS2 family.

This chain is Small ribosomal subunit protein uS2, found in Buchnera aphidicola subsp. Cinara cedri (strain Cc).